The primary structure comprises 239 residues: MKKSIRFFIVSILLSPFASAQVKDFVIEPPIKNNLHIYKTFGVFGGKEYSANSMYLVTKKGVVLFDVPWEKIQYQSLMDTIKKRHNLPVVAVFATHSHDDRAGDLSFFNNKGIKTYATAKTNEFLKKDGKATSTEIIKTGKPYRIGGEEFVVDFLGEGHTADNVVVWFPKYNVLDGGCLVKSNSATDLGYIKEANVEQWPKTINKLKAKYSKATLIIPGHDEWKGGGHVEHTLELLNKK.

The first 20 residues, 1-20 (MKKSIRFFIVSILLSPFASA), serve as a signal peptide directing secretion. Residues H96, H98, D100, H159, and C178 each coordinate Zn(2+). K181 serves as a coordination point for a beta-lactam. H220 lines the Zn(2+) pocket.

Belongs to the metallo-beta-lactamase superfamily. Class-B beta-lactamase family. In terms of assembly, monomer. The cofactor is Zn(2+).

It localises to the periplasm. It carries out the reaction a beta-lactam + H2O = a substituted beta-amino acid. Inhibited by chelating agents such as EDTA. Not susceptible to inactivation by the beta-lactamase-blocking agent clavulanic acid. In terms of biological role, class B beta-lactamase which confers resistance to the beta-lactam antibiotics, including penicillins, cephalosporins and carbapenems. Acts via hydrolysis of the beta-lactam ring. Has penicillin-, cephalosporin- and carbapenem-hydrolyzing activities. In Chryseobacterium indologenes (Flavobacterium indologenes), this protein is Metallo-beta-lactamase IND-1.